The primary structure comprises 486 residues: Glutamate--tRNA ligase (486 aa).

Residues 11-21 (PSPTGFLHIGG) carry the 'HIGH' region motif. Residues cysteine 108, cysteine 110, cysteine 136, and histidine 138 each contribute to the Zn(2+) site. The 'KMSKS' region signature appears at 253–257 (KLSKR). An ATP-binding site is contributed by lysine 256.

Belongs to the class-I aminoacyl-tRNA synthetase family. Glutamate--tRNA ligase type 1 subfamily. Monomer. Requires Zn(2+) as cofactor.

It localises to the cytoplasm. The enzyme catalyses tRNA(Glu) + L-glutamate + ATP = L-glutamyl-tRNA(Glu) + AMP + diphosphate. In terms of biological role, catalyzes the attachment of glutamate to tRNA(Glu) in a two-step reaction: glutamate is first activated by ATP to form Glu-AMP and then transferred to the acceptor end of tRNA(Glu). This Lysinibacillus sphaericus (strain C3-41) protein is Glutamate--tRNA ligase.